A 76-amino-acid chain; its full sequence is MKLVLAIVVILMLLSLSTGAEMSDNHASMSANALRDRLLGPKALLCGGTHARCNRDNDCCGSLCCFGTCISAFVPC.

The N-terminal stretch at 1–19 is a signal peptide; the sequence is MKLVLAIVVILMLLSLSTG. A propeptide spanning residues 20-42 is cleaved from the precursor; the sequence is AEMSDNHASMSANALRDRLLGPK. 4 disulfides stabilise this stretch: cysteine 46/cysteine 60, cysteine 53/cysteine 65, cysteine 59/cysteine 69, and cysteine 64/cysteine 76.

In terms of tissue distribution, expressed by the venom duct.

It localises to the secreted. The protein is Conotoxin Ca11b of Conus caracteristicus (Characteristic cone).